Consider the following 465-residue polypeptide: Probable protein phosphatase 2C 71 (465 aa).

Disordered regions lie at residues 14 to 47 (RPCKLAPPPPPPLPVSPSPRHHRRPHSTATACRA), 68 to 119 (RPRD…GEVT), and 133 to 191 (SGGA…PAEE). Over residues 18–30 (LAPPPPPPLPVSP) the composition is skewed to pro residues. 2 stretches are compositionally biased toward low complexity: residues 84 to 106 (AVAPEAAAVVESGLDGDAAAAAE) and 133 to 143 (SGGAEATATSG). In terms of domain architecture, PPM-type phosphatase spans 222–460 (ASGAAILPHP…DDIAVVVSIV (239 aa)). Mn(2+)-binding residues include D254, G255, D384, and D451.

The protein belongs to the PP2C family. Requires Mg(2+) as cofactor. Mn(2+) is required as a cofactor.

The catalysed reaction is O-phospho-L-seryl-[protein] + H2O = L-seryl-[protein] + phosphate. It carries out the reaction O-phospho-L-threonyl-[protein] + H2O = L-threonyl-[protein] + phosphate. This is Probable protein phosphatase 2C 71 from Oryza sativa subsp. japonica (Rice).